A 323-amino-acid chain; its full sequence is Pseudouridylate synthase TRUB2, mitochondrial (323 aa).

Aspartate 98 functions as the Nucleophile in the catalytic mechanism. The tract at residues 302 to 323 (SGHQQQLPSAGQPWASRVQAPL) is disordered.

This sequence belongs to the pseudouridine synthase TruB family. As to quaternary structure, forms a regulatory protein-RNA complex, consisting of RCC1L, NGRN, RPUSD3, RPUSD4, TRUB2, FASTKD2 and 16S mt-rRNA.

Its subcellular location is the mitochondrion matrix. The catalysed reaction is a uridine in mRNA = a pseudouridine in mRNA. The enzyme catalyses uridine(55) in tRNA = pseudouridine(55) in tRNA. Functionally, minor enzyme contributing to the isomerization of uridine to pseudouridine (pseudouridylation) of specific mitochondrial mRNAs (mt-mRNAs) such as COXI and COXIII mt-mRNAs. As a component of a functional protein-RNA module, consisting of RCC1L, NGRN, RPUSD3, RPUSD4, TRUB2, FASTKD2 and 16S mitochondrial ribosomal RNA (16S mt-rRNA), controls 16S mt-rRNA abundance and is required for intra-mitochondrial translation. Also catalyzes pseudouridylation of some tRNAs, including synthesis of pseudouridine(55) from uracil-55, in the psi GC loop of a subset of tRNAs. This is Pseudouridylate synthase TRUB2, mitochondrial from Rattus norvegicus (Rat).